Here is a 286-residue protein sequence, read N- to C-terminus: 4-hydroxybenzoate octaprenyltransferase (286 aa).

The next 7 membrane-spanning stretches (helical) occupy residues 21–40 (GTLL…AGGM), 95–115 (ILFV…NGLV), 142–162 (FLGI…TGEV), 167–187 (WWLF…YAMV), 210–230 (QIIG…GWSA), 235–255 (LYGL…MLIF), and 266–286 (FLNN…DYLI).

It belongs to the UbiA prenyltransferase family. Mg(2+) is required as a cofactor.

Its subcellular location is the cell inner membrane. The catalysed reaction is all-trans-octaprenyl diphosphate + 4-hydroxybenzoate = 4-hydroxy-3-(all-trans-octaprenyl)benzoate + diphosphate. The protein operates within cofactor biosynthesis; ubiquinone biosynthesis. Catalyzes the prenylation of para-hydroxybenzoate (PHB) with an all-trans polyprenyl group. Mediates the second step in the final reaction sequence of ubiquinone-8 (UQ-8) biosynthesis, which is the condensation of the polyisoprenoid side chain with PHB, generating the first membrane-bound Q intermediate 3-octaprenyl-4-hydroxybenzoate. The protein is 4-hydroxybenzoate octaprenyltransferase of Shewanella baltica (strain OS155 / ATCC BAA-1091).